A 368-amino-acid chain; its full sequence is Solute carrier family 35 member G1 (368 aa).

Transmembrane regions (helical) follow at residues glycine 72–valine 92, alanine 100–isoleucine 120, leucine 134–phenylalanine 154, aspartate 161–leucine 181, alanine 190–phenylalanine 210, isoleucine 225–leucine 245, leucine 256–isoleucine 276, leucine 289–valine 309, leucine 316–phenylalanine 336, and proline 340–isoleucine 360. 2 consecutive EamA domains span residues phenylalanine 83 to arginine 205 and valine 236 to isoleucine 360.

This sequence belongs to the TMEM20 family. As to quaternary structure, interacts with STIM1; stimulated by depletion of intracellular calcium. Interacts with ORAI1. Interacts with the plasma membrane calcium-transporting ATPases ATP2B1 and ATP2B4. Interacts with ATP1A1, ATP2A2, KPNB1 and XPO1.

The protein resides in the cell membrane. Its subcellular location is the endoplasmic reticulum membrane. Functionally, may play a role in intracellular calcium sensing and homeostasis. May act as a negative regulator of plasma membrane calcium-transporting ATPases preventing calcium efflux from the cell. The protein is Solute carrier family 35 member G1 (Slc35g1) of Mus musculus (Mouse).